The following is a 935-amino-acid chain: Non-structural polyprotein 1A (935 aa).

Residues 104–142 are a coiled coil; sequence KLIHKANALQERLRLSQEEKATLALDVQFLQHENVRLKE. The next 4 helical transmembrane spans lie at 239-259, 286-306, 313-333, and 344-364; these read VFYY…LAIG, VLPT…TLMV, LLAI…LCFM, and GLIA…LTGT. Catalysis depends on charge relay system; for serine protease activity residues H461, D489, and S551. Residues 587–620 adopt a coiled-coil conformation; the sequence is VKAPSQVELLKEEIERLKAQLNSATENATTVVTQ. Residue Y693 is modified to O-(5'-phospho-RNA)-tyrosine. 2 disordered regions span residues 756-828 and 915-935; these read AKPI…YSQT and NKAP…TTTH. The segment covering 922–935 has biased composition (low complexity); it reads KGPQKTKGPKTTTH.

Belongs to the astroviridae polyprotein 1A family. As to quaternary structure, monomer. Post-translationally, cleaved by the viral and host proteases. The protease is probably autocatalytically cleaved.

It is found in the host membrane. It carries out the reaction RNA(n) + a ribonucleoside 5'-triphosphate = RNA(n+1) + diphosphate. Its function is as follows. Responsible for the cleavage of the polyprotein into functional products. Functionally, protein covalently attached to the 5' extremity of the genomic and subgenomic RNAs. It may serve as a primer for the replicase. The polypeptide is Non-structural polyprotein 1A (ORF1) (Human astrovirus-1 (HAstV-1)).